We begin with the raw amino-acid sequence, 159 residues long: Ribosomal RNA large subunit methyltransferase H (159 aa).

Residues Leu76 and Gly108 each coordinate S-adenosyl-L-methionine.

Belongs to the RNA methyltransferase RlmH family. In terms of assembly, homodimer.

Its subcellular location is the cytoplasm. It catalyses the reaction pseudouridine(1915) in 23S rRNA + S-adenosyl-L-methionine = N(3)-methylpseudouridine(1915) in 23S rRNA + S-adenosyl-L-homocysteine + H(+). Functionally, specifically methylates the pseudouridine at position 1915 (m3Psi1915) in 23S rRNA. The chain is Ribosomal RNA large subunit methyltransferase H from Levilactobacillus brevis (strain ATCC 367 / BCRC 12310 / CIP 105137 / JCM 1170 / LMG 11437 / NCIMB 947 / NCTC 947) (Lactobacillus brevis).